Here is a 515-residue protein sequence, read N- to C-terminus: ATP-dependent rRNA helicase rrp-3 (515 aa).

The segment at 1–85 is disordered; sequence MSTKRRKTSD…LDVAPEQEEV (85 aa). Positions 15–24 are enriched in low complexity; sequence LKKAAAPSAP. The span at 25–55 shows a compositional bias: basic and acidic residues; the sequence is ELKKEKKVKDKSTKDKSSTKKTEKTEKKQDA. The segment covering 69–85 has biased composition (acidic residues); it reads TEEDSVTLDVAPEQEEV. A Q motif motif is present at residues 90 to 118; that stretch reads KTFKDLGIVDALCEACERLGYKNPTPIQE. The 172-residue stretch at 121–292 folds into the Helicase ATP-binding domain; the sequence is IPLALQNRDI…RASLRDPLKV (172 aa). An ATP-binding site is contributed by 134–141; that stretch reads AETGSGKT. The DEAD box signature appears at 240–243; that stretch reads DEAD. The region spanning 316-464 is the Helicase C-terminal domain; it reads HKDTYLVYLC…EYPLEKDEVM (149 aa). Positions 482-515 are disordered; it reads KSLMENQGKHGGLLKRKRGNGQGGGRDHMDAEEG. Residues 506-515 show a composition bias toward basic and acidic residues; the sequence is GRDHMDAEEG.

This sequence belongs to the DEAD box helicase family. DDX47/RRP3 subfamily.

The protein localises to the nucleus. Functionally, required for pre-ribosomal RNA processing. Involved in the maturation of the 35S-pre-rRNA and to its cleavage to mature 18S rRNA. In Neurospora crassa (strain ATCC 24698 / 74-OR23-1A / CBS 708.71 / DSM 1257 / FGSC 987), this protein is ATP-dependent rRNA helicase rrp-3 (rrp-3).